The primary structure comprises 95 residues: Embryonic abundant protein 1 (95 aa).

Positions 1–10 (MASGQQQQGR) are enriched in polar residues. The disordered stretch occupies residues 1 to 95 (MASGQQQQGR…IDESKYKTKS (95 aa)). Composition is skewed to basic and acidic residues over residues 40-64 (AEGRSRGGQTRKEQMGEEGYREMGR) and 75-95 (GGERAAREGIDIDESKYKTKS).

The protein belongs to the small hydrophilic plant seed protein family. As to expression, expressed in dry seeds and immature embryos.

Em protein may act as a cytoplasm protectant during desiccation. This chain is Embryonic abundant protein 1 (EMP1), found in Oryza sativa subsp. japonica (Rice).